A 602-amino-acid polypeptide reads, in one-letter code: Protein NRT1/ PTR FAMILY 5.7 (602 aa).

2 helical membrane passes run 56-73 and 87-107; these read LSYF…TTIL and WSGV…AYLG. Thr-111 carries the post-translational modification Phosphothreonine. The next 10 helical transmembrane spans lie at 112–132, 152–172, 197–217, 220–240, 337–357, 381–401, 422–442, 465–485, 500–520, and 548–568; these read VLLA…SWFI, IAFF…KPSL, WWNA…VYIE, IGWG…FFIF, VKLL…GVCA, IVPP…TVTI, ILQR…IAAL, IWLA…LVGL, LGIA…NLLI, and FYWM…IVAM.

Belongs to the major facilitator superfamily. Proton-dependent oligopeptide transporter (POT/PTR) (TC 2.A.17) family. Expressed in shoots, stems, leaves and flowers.

It is found in the membrane. The chain is Protein NRT1/ PTR FAMILY 5.7 (NPF5.7) from Arabidopsis thaliana (Mouse-ear cress).